Consider the following 310-residue polypeptide: Tagatose-6-phosphate kinase (310 aa).

This sequence belongs to the carbohydrate kinase PfkB family. LacC subfamily.

The enzyme catalyses D-tagatofuranose 6-phosphate + ATP = D-tagatofuranose 1,6-bisphosphate + ADP + H(+). The protein operates within carbohydrate metabolism; D-tagatose 6-phosphate degradation; D-glyceraldehyde 3-phosphate and glycerone phosphate from D-tagatose 6-phosphate: step 1/2. The protein is Tagatose-6-phosphate kinase of Lactococcus lactis subsp. lactis (Streptococcus lactis).